Reading from the N-terminus, the 928-residue chain is Echinoderm microtubule-associated protein-like 4 (928 aa).

The microtubule-binding stretch occupies residues 1–189 (MDGFAGSLDD…IPSDVENYDD (189 aa)). Positions 14–63 (AASTSDVQDRLSALELRVQQQEDEITVLKAALADVLRRLAISEDQVATVR) form a coiled coil. The interval 107-131 (SAAKSVKRSSTIEKSHNSWDASEES) is disordered. Over residues 116–131 (STIEKSHNSWDASEES) the composition is skewed to basic and acidic residues. 13 WD repeats span residues 199 to 237 (LKLE…LFNY), 241 to 288 (TQRH…VWDS), 296 to 336 (VIGL…VWDW), 343 to 378 (AEIK…FWTW), 385 to 424 (RKQG…IWSK), 442 to 480 (QISR…MWDH), 485 to 521 (EREI…LRGT), 524 to 563 (DGFQ…LWNS), 567 to 604 (SLEW…VLDA), 610 to 646 (VSIH…LYNV), 653 to 692 (YSRY…YWDI), 702 to 760 (RSDC…LFQY), and 767 to 806 (APSH…QWRL). The disordered stretch occupies residues 821–928 (SSSAVNSPVV…ENQDDSSPLS (108 aa)). Residues 836 to 845 (QPNTPTNLPQ) are compositionally biased toward polar residues. Acidic residues predominate over residues 867 to 876 (DALEQPEELN). The span at 877–898 (EVQSEKCSSQPEGANGQEPSNE) shows a compositional bias: polar residues.

It belongs to the WD repeat EMAP family. As to quaternary structure, homotrimer; self-association is mediated by the N-terminal coiled coil.

The protein localises to the cytoplasm. It localises to the cytoskeleton. The protein resides in the spindle. Its subcellular location is the microtubule organizing center. It is found in the midbody. In terms of biological role, essential for the formation and stability of microtubules (MTs). Required for the organization of the mitotic spindle and for the proper attachment of kinetochores to MTs. Promotes the recruitment of NUDC to the mitotic spindle for mitotic progression. The sequence is that of Echinoderm microtubule-associated protein-like 4 (eml4) from Xenopus tropicalis (Western clawed frog).